The primary structure comprises 323 residues: Cytochrome c biogenesis protein CcsA (323 aa).

Transmembrane regions (helical) follow at residues 9–29 (ILTH…LITL), 37–57 (LYVS…GLLV), 71–91 (LYES…FTYF), 100–120 (VSAI…SGFL), 145–165 (MVLG…LIVI), 227–247 (IISL…VWAN), 261–275 (TWAF…IYLH), and 288–308 (AIVA…VNLL).

This sequence belongs to the CcmF/CycK/Ccl1/NrfE/CcsA family. As to quaternary structure, may interact with Ccs1.

It is found in the plastid. The protein resides in the chloroplast thylakoid membrane. In terms of biological role, required during biogenesis of c-type cytochromes (cytochrome c6 and cytochrome f) at the step of heme attachment. The sequence is that of Cytochrome c biogenesis protein CcsA from Cucumis sativus (Cucumber).